The primary structure comprises 542 residues: CTP synthase (542 aa).

The interval 1–265 (MARYVFITGG…DDEVLAAFGI (265 aa)) is amidoligase domain. Ser13 contacts CTP. Ser13 contacts UTP. Residues 14–19 (SLGKGI) and Asp71 each bind ATP. The Mg(2+) site is built by Asp71 and Glu139. Residues 146 to 148 (DIE), 186 to 191 (KTKPTQ), and Lys222 contribute to the CTP site. Residues 186–191 (KTKPTQ) and Lys222 contribute to the UTP site. The region spanning 291–541 (TIAIVGKYTG…IEAATEQSRL (251 aa)) is the Glutamine amidotransferase type-1 domain. Gly353 provides a ligand contact to L-glutamine. The active-site Nucleophile; for glutamine hydrolysis is the Cys380. L-glutamine-binding positions include 381–384 (FGMQ), Glu404, and Arg469. Active-site residues include His514 and Glu516.

This sequence belongs to the CTP synthase family. Homotetramer.

It carries out the reaction UTP + L-glutamine + ATP + H2O = CTP + L-glutamate + ADP + phosphate + 2 H(+). The enzyme catalyses L-glutamine + H2O = L-glutamate + NH4(+). It catalyses the reaction UTP + NH4(+) + ATP = CTP + ADP + phosphate + 2 H(+). It participates in pyrimidine metabolism; CTP biosynthesis via de novo pathway; CTP from UDP: step 2/2. Its activity is regulated as follows. Allosterically activated by GTP, when glutamine is the substrate; GTP has no effect on the reaction when ammonia is the substrate. The allosteric effector GTP functions by stabilizing the protein conformation that binds the tetrahedral intermediate(s) formed during glutamine hydrolysis. Inhibited by the product CTP, via allosteric rather than competitive inhibition. Catalyzes the ATP-dependent amination of UTP to CTP with either L-glutamine or ammonia as the source of nitrogen. Regulates intracellular CTP levels through interactions with the four ribonucleotide triphosphates. This chain is CTP synthase, found in Rhizobium johnstonii (strain DSM 114642 / LMG 32736 / 3841) (Rhizobium leguminosarum bv. viciae).